The chain runs to 810 residues: Transducer protein CosT (810 aa).

The Cytoplasmic portion of the chain corresponds to 1-38; the sequence is MSEPTADAGDNSPSSTDTAPLDRVKAIALLPLRSYLVK. Residues 39 to 59 traverse the membrane as a helical segment; sequence FAVALLVILVIIAAGGFWVQA. At 60-323 the chain is on the extracellular side; that stretch reads DATATLEANT…AFALSNQIRT (264 aa). Residues 324 to 344 traverse the membrane as a helical segment; that stretch reads GILGFILVALVGVVLVGGTIG. An HAMP 1 domain is found at 345-397; sequence RNTAAAVQSLSAAAAEIEAGNYDVDVASSRRDEIGQLFASIGSMRDALVTQID. At 345–810 the chain is on the cytoplasmic side; the sequence is RNTAAAVQSL…DRDVTPTQTD (466 aa). The segment at 403-427 is disordered; the sequence is REQATEAQQDAEAERERAEDARERA. Positions 414–427 are enriched in basic and acidic residues; the sequence is EAERERAEDARERA. The HAMP 2 domain occupies 439 to 493; the sequence is AELEAQAERYSDVMAACADGDLTRRMPADDTDNEAMAAIAASFNEMLAQWEHTII. The region spanning 512 to 748 is the Methyl-accepting transducer domain; the sequence is GAADAERASG…EAVSMTEEVA (237 aa). 2 positions are modified to glutamate methyl ester (Glu): glutamate 556 and glutamate 739. Positions 751-784 are disordered; sequence SDSTAGEAQSVSAAAEEQAASMSEISDSVESLSG. Over residues 755–774 the composition is skewed to low complexity; that stretch reads AGEAQSVSAAAEEQAASMSE. Polar residues predominate over residues 775-784; sequence ISDSVESLSG.

Belongs to the methyl-accepting chemotaxis (MCP) protein family. Post-translationally, methylated by CheR.

It localises to the cell membrane. Functionally, mediates chemotaxis towards compatible osmolytes. Probably transduces the signal from the substrate-binding protein CosB to the histidine kinase CheA. The chain is Transducer protein CosT (cosT) from Halobacterium salinarum (strain ATCC 700922 / JCM 11081 / NRC-1) (Halobacterium halobium).